The primary structure comprises 490 residues: Ribosome biogenesis protein YTM1 (490 aa).

A disordered region spans residues 1–22 (MDGLEDGPLDASTATSQKPQRQ). Positions 23–104 (VRLKLTSRHE…ETTLDVEYVR (82 aa)) are ubiquitin-like (UBL) domain. WD repeat units follow at residues 116 to 168 (LHDD…IALS), 175 to 213 (GHTA…DGFS), 224 to 263 (GHKG…NPAA), 298 to 338 (SHTA…LVDT), 340 to 379 (TASH…TTVS), 385 to 425 (GHTN…TDKD), and 449 to 487 (GEGV…PNGG). A disordered region spans residues 255–286 (TRKSENPAAPESLLPSNTSRSSKRRKLNSSVS).

This sequence belongs to the WD repeat WDR12/YTM1 family. Component of the NOP7 complex, composed of ERB1, NOP7 and YTM1. The complex is held together by ERB1, which interacts with NOP7 via its N-terminal domain and with YTM1 via a high-affinity interaction between the seven-bladed beta-propeller domains of the 2 proteins. The NOP7 complex associates with the 66S pre-ribosome. Interacts (via UBL domain) with MDN1 (via VWFA/MIDAS domain).

The protein localises to the nucleus. It localises to the nucleolus. Its subcellular location is the nucleoplasm. In terms of biological role, component of the NOP7 complex, which is required for maturation of the 25S and 5.8S ribosomal RNAs and formation of the 60S ribosome. This Ajellomyces capsulatus (strain NAm1 / WU24) (Darling's disease fungus) protein is Ribosome biogenesis protein YTM1.